Consider the following 305-residue polypeptide: Acetyl-coenzyme A carboxylase carboxyl transferase subunit beta (305 aa).

The CoA carboxyltransferase N-terminal domain occupies 25–293 (LWVQCPACQQ…LPKVESVASL (269 aa)). Zn(2+) contacts are provided by Cys29, Cys32, Cys48, and Cys51. A C4-type zinc finger spans residues 29-51 (CPACQQMIFARDLEKNQRVCTHC).

It belongs to the AccD/PCCB family. In terms of assembly, acetyl-CoA carboxylase is a heterohexamer composed of biotin carboxyl carrier protein (AccB), biotin carboxylase (AccC) and two subunits each of ACCase subunit alpha (AccA) and ACCase subunit beta (AccD). It depends on Zn(2+) as a cofactor.

It localises to the cytoplasm. The enzyme catalyses N(6)-carboxybiotinyl-L-lysyl-[protein] + acetyl-CoA = N(6)-biotinyl-L-lysyl-[protein] + malonyl-CoA. Its pathway is lipid metabolism; malonyl-CoA biosynthesis; malonyl-CoA from acetyl-CoA: step 1/1. Component of the acetyl coenzyme A carboxylase (ACC) complex. Biotin carboxylase (BC) catalyzes the carboxylation of biotin on its carrier protein (BCCP) and then the CO(2) group is transferred by the transcarboxylase to acetyl-CoA to form malonyl-CoA. The protein is Acetyl-coenzyme A carboxylase carboxyl transferase subunit beta of Granulibacter bethesdensis (strain ATCC BAA-1260 / CGDNIH1).